A 1174-amino-acid polypeptide reads, in one-letter code: Pecanex-like protein 4 (1174 aa).

14 helical membrane-spanning segments follow: residues 40 to 60 (IYVN…TGTL), 72 to 92 (AAAL…LISV), 140 to 160 (TVFH…YLLP), 173 to 193 (TAVL…SLIV), 217 to 237 (LYIF…NIPA), 244 to 264 (ILHI…LPPP), 284 to 304 (SMST…AAVV), 307 to 327 (FIPS…LLSL), 366 to 386 (FLFI…HHYV), 394 to 414 (SGAQ…VWIL), 451 to 471 (IGAV…VAFL), 543 to 563 (LIQF…LWTE), 580 to 600 (VFAP…SPLL), and 643 to 663 (LTAA…LPGS). A compositionally biased stretch (polar residues) spans 785–797 (PSTQENKTENTGE). Residues 785–875 (PSTQENKTEN…DDHSAGTGPK (91 aa)) form a disordered region. N790 is a glycosylation site (N-linked (GlcNAc...) asparagine). Low complexity predominate over residues 798–810 (ASPALPPAANSSP). The segment covering 835-846 (PAIKNRKEKLQS) has biased composition (basic and acidic residues). 2 N-linked (GlcNAc...) asparagine glycosylation sites follow: N1122 and N1149.

The protein belongs to the pecanex family.

It localises to the membrane. The polypeptide is Pecanex-like protein 4 (Mus musculus (Mouse)).